The chain runs to 90 residues: Acylphosphatase (90 aa).

The Acylphosphatase-like domain occupies 5–90; the sequence is CLKAWVTGRV…DPPPGTFELG (86 aa). Active-site residues include arginine 20 and asparagine 38.

It belongs to the acylphosphatase family.

The enzyme catalyses an acyl phosphate + H2O = a carboxylate + phosphate + H(+). In Chromohalobacter salexigens (strain ATCC BAA-138 / DSM 3043 / CIP 106854 / NCIMB 13768 / 1H11), this protein is Acylphosphatase (acyP).